The following is a 332-amino-acid chain: tRNA-dihydrouridine(20/20a) synthase (332 aa).

FMN-binding positions include 22-24 (PMM) and Gln75. Cys105 acts as the Proton donor in catalysis. FMN contacts are provided by residues Lys144, His177, 217–219 (NGG), and 239–240 (GR).

It belongs to the Dus family. DusA subfamily. FMN is required as a cofactor.

The catalysed reaction is 5,6-dihydrouridine(20) in tRNA + NADP(+) = uridine(20) in tRNA + NADPH + H(+). It carries out the reaction 5,6-dihydrouridine(20) in tRNA + NAD(+) = uridine(20) in tRNA + NADH + H(+). The enzyme catalyses 5,6-dihydrouridine(20a) in tRNA + NADP(+) = uridine(20a) in tRNA + NADPH + H(+). It catalyses the reaction 5,6-dihydrouridine(20a) in tRNA + NAD(+) = uridine(20a) in tRNA + NADH + H(+). Its function is as follows. Catalyzes the synthesis of 5,6-dihydrouridine (D), a modified base found in the D-loop of most tRNAs, via the reduction of the C5-C6 double bond in target uridines. Specifically modifies U20 and U20a in tRNAs. This chain is tRNA-dihydrouridine(20/20a) synthase, found in Xylella fastidiosa (strain Temecula1 / ATCC 700964).